We begin with the raw amino-acid sequence, 105 residues long: Small ribosomal subunit protein uS10 (105 aa).

It belongs to the universal ribosomal protein uS10 family. As to quaternary structure, part of the 30S ribosomal subunit.

Functionally, involved in the binding of tRNA to the ribosomes. The polypeptide is Small ribosomal subunit protein uS10 (Synechocystis sp. (strain ATCC 27184 / PCC 6803 / Kazusa)).